A 100-amino-acid chain; its full sequence is Large ribosomal subunit protein bL28 (100 aa).

It belongs to the bacterial ribosomal protein bL28 family.

In Methylobacterium radiotolerans (strain ATCC 27329 / DSM 1819 / JCM 2831 / NBRC 15690 / NCIMB 10815 / 0-1), this protein is Large ribosomal subunit protein bL28.